The primary structure comprises 394 residues: Acetyl-CoA acetyltransferase (394 aa).

The active-site Acyl-thioester intermediate is the Cys89. Active-site proton acceptor residues include His350 and Cys380.

The protein belongs to the thiolase-like superfamily. Thiolase family. Homotetramer.

It localises to the cytoplasm. It catalyses the reaction 2 acetyl-CoA = acetoacetyl-CoA + CoA. The protein operates within biopolymer metabolism; poly-(R)-3-hydroxybutanoate biosynthesis. It functions in the pathway metabolic intermediate biosynthesis; (R)-mevalonate biosynthesis; (R)-mevalonate from acetyl-CoA: step 1/3. In Allochromatium vinosum (strain ATCC 17899 / DSM 180 / NBRC 103801 / NCIMB 10441 / D) (Chromatium vinosum), this protein is Acetyl-CoA acetyltransferase.